The primary structure comprises 207 residues: Small ribosomal subunit protein uS4c (207 aa).

Residues 92 to 153 (MRLDNILFRL…PKTYQSILSK (62 aa)) enclose the S4 RNA-binding domain.

This sequence belongs to the universal ribosomal protein uS4 family. Part of the 30S ribosomal subunit. Contacts protein S5. The interaction surface between S4 and S5 is involved in control of translational fidelity.

The protein localises to the plastid. The protein resides in the chloroplast. In terms of biological role, one of the primary rRNA binding proteins, it binds directly to 16S rRNA where it nucleates assembly of the body of the 30S subunit. Its function is as follows. With S5 and S12 plays an important role in translational accuracy. This Equisetum laevigatum (Smooth horsetail) protein is Small ribosomal subunit protein uS4c (rps4).